The sequence spans 245 residues: MTKSPIGGNRSGRKLGQKVKKGKLKASSRRWLERHINDPYVQRAQLEGYRARAAFKLLEIDEKHKILAGARRIIDLGAAPGSWSQIAAKVTNSTDADPRVAAIDFLEMDPIPGVRFLQLDFLDPEAPEKLKEAIGGTPDLVLSDMAAPTTGHRQTDHLRTMHLCEVAAHFAVDVLAKGGHFLAKTFQGGTERDLLNMLKQNFSQVIHVKPASSRTESVEMFLLAKGFKGRRKAETEEPAEDAAAE.

The disordered stretch occupies residues 1–25 (MTKSPIGGNRSGRKLGQKVKKGKLK). Basic residues predominate over residues 11 to 25 (SGRKLGQKVKKGKLK). S-adenosyl-L-methionine contacts are provided by glycine 81, tryptophan 83, aspartate 104, aspartate 120, and aspartate 144. Catalysis depends on lysine 184, which acts as the Proton acceptor.

The protein belongs to the class I-like SAM-binding methyltransferase superfamily. RNA methyltransferase RlmE family.

Its subcellular location is the cytoplasm. It carries out the reaction uridine(2552) in 23S rRNA + S-adenosyl-L-methionine = 2'-O-methyluridine(2552) in 23S rRNA + S-adenosyl-L-homocysteine + H(+). Functionally, specifically methylates the uridine in position 2552 of 23S rRNA at the 2'-O position of the ribose in the fully assembled 50S ribosomal subunit. The polypeptide is Ribosomal RNA large subunit methyltransferase E (Sinorhizobium fredii (strain NBRC 101917 / NGR234)).